The sequence spans 432 residues: Gamma-glutamyl phosphate reductase (432 aa).

The protein belongs to the gamma-glutamyl phosphate reductase family.

It localises to the cytoplasm. The enzyme catalyses L-glutamate 5-semialdehyde + phosphate + NADP(+) = L-glutamyl 5-phosphate + NADPH + H(+). It participates in amino-acid biosynthesis; L-proline biosynthesis; L-glutamate 5-semialdehyde from L-glutamate: step 2/2. Catalyzes the NADPH-dependent reduction of L-glutamate 5-phosphate into L-glutamate 5-semialdehyde and phosphate. The product spontaneously undergoes cyclization to form 1-pyrroline-5-carboxylate. This Psychrobacter sp. (strain PRwf-1) protein is Gamma-glutamyl phosphate reductase.